The following is a 344-amino-acid chain: Geranylgeranyl pyrophosphate synthase 10, mitochondrial (344 aa).

The transit peptide at 1–40 directs the protein to the mitochondrion; sequence MENREVFVYIVISIFRSLQFLFWRFRPRYNDVTSALTRPL. 3 residues coordinate isopentenyl diphosphate: lysine 91, arginine 94, and histidine 123. The Mg(2+) site is built by aspartate 130 and aspartate 136. Arginine 141 contributes to the dimethylallyl diphosphate binding site. Residue arginine 142 participates in isopentenyl diphosphate binding. The dimethylallyl diphosphate site is built by lysine 229, threonine 230, glutamine 267, lysine 284, and lysine 294.

The protein belongs to the FPP/GGPP synthase family. Monomer. It depends on Mg(2+) as a cofactor.

The protein resides in the mitochondrion. The enzyme catalyses isopentenyl diphosphate + dimethylallyl diphosphate = (2E)-geranyl diphosphate + diphosphate. It carries out the reaction isopentenyl diphosphate + (2E)-geranyl diphosphate = (2E,6E)-farnesyl diphosphate + diphosphate. The catalysed reaction is isopentenyl diphosphate + (2E,6E)-farnesyl diphosphate = (2E,6E,10E)-geranylgeranyl diphosphate + diphosphate. It functions in the pathway isoprenoid biosynthesis; farnesyl diphosphate biosynthesis; farnesyl diphosphate from geranyl diphosphate and isopentenyl diphosphate: step 1/1. It participates in isoprenoid biosynthesis; geranyl diphosphate biosynthesis; geranyl diphosphate from dimethylallyl diphosphate and isopentenyl diphosphate: step 1/1. The protein operates within isoprenoid biosynthesis; geranylgeranyl diphosphate biosynthesis; geranylgeranyl diphosphate from farnesyl diphosphate and isopentenyl diphosphate: step 1/1. Catalyzes the trans-addition of the three molecules of IPP onto DMAPP to form geranylgeranyl pyrophosphate. This chain is Geranylgeranyl pyrophosphate synthase 10, mitochondrial, found in Arabidopsis thaliana (Mouse-ear cress).